We begin with the raw amino-acid sequence, 215 residues long: High mobility group protein B1 (215 aa).

Residue Gly-2–Arg-10 participates in heparin binding. The sufficient for interaction with HAVCR2 stretch occupies residues Gly-2 to Arg-97. N6-acetyllysine is present on residues Lys-3, Lys-7, Lys-8, and Lys-12. Residues Lys-3–Ser-15 are LPS binding (delipidated). The segment at residues Pro-9 to Ile-79 is a DNA-binding region (HMG box 1). The residue at position 23 (Cys-23) is a Cysteine sulfonic acid (-SO3H); alternate. The cysteines at positions 23 and 45 are disulfide-linked. Residues His-27–Lys-43 carry the Nuclear localization signal (NLS) 1 motif. An N6-acetyllysine mark is found at Lys-28, Lys-29, and Lys-30. Lys-28 is covalently cross-linked (Isoglutamyl lysine isopeptide (Lys-Gln) (interchain with Q-?)). Ser-35 is subject to Phosphoserine. N6-acetyllysine is present on Lys-43. Residues Lys-43 and Lys-44 each participate in an isoglutamyl lysine isopeptide (Lys-Gln) (interchain with Q-?) cross-link. Position 45 is a cysteine sulfonic acid (-SO3H); alternate (Cys-45). Lys-68 participates in a covalent cross-link: Isoglutamyl lysine isopeptide (Lys-Gln) (interchain with Q-?). The disordered stretch occupies residues Lys-76–Pro-95. Residues Pro-80–Lys-96 form an LPS binding (Lipid A) region. Positions Gly-83–Ala-94 are enriched in basic and acidic residues. Positions Phe-89–Glu-108 are cytokine-stimulating activity. Lys-90 bears the N6-acetyllysine mark. A DNA-binding region (HMG box 2) is located at residues Pro-95–Arg-163. Ser-100 carries the post-translational modification Phosphoserine. Cys-106 carries the cysteine sulfonic acid (-SO3H) modification. N6-acetyllysine occurs at positions 127, 128, 141, 172, 173, 177, and 180. The interval Lys-150–Lys-183 is binding to AGER/RAGE. Basic and acidic residues predominate over residues Ala-161–Glu-179. The disordered stretch occupies residues Ala-161–Glu-215. A Nuclear localization signal (NLS) 2 motif is present at residues Ala-178–Lys-184. Lys-180 is covalently cross-linked (Isoglutamyl lysine isopeptide (Lys-Gln) (interchain with Q-?)). Ser-181 carries the ADP-ribosylserine modification. Residues Lys-182, Lys-183, Lys-184, and Lys-185 each carry the N6-acetyllysine modification. Residues Lys-182, Lys-183, and Lys-184 each participate in an isoglutamyl lysine isopeptide (Lys-Gln) (interchain with Q-?) cross-link. Positions Glu-187 to Glu-215 are enriched in acidic residues.

Belongs to the HMGB family. As to quaternary structure, interacts (fully reduced HMGB1) with CXCL12; probably in a 1:2 ratio involving two molecules of CXCL12, each interacting with one HMG box of HMGB1; inhibited by glycyrrhizin. Associates with the TLR4:LY96 receptor complex. Component of the RAG complex composed of core components RAG1 and RAG2, and associated component HMGB1 or HMGB2. Interacts (in cytoplasm upon starvation) with BECN1; inhibits the interaction of BECN1 and BCL2 leading to promotion of autophagy. Interacts with KPNA1; involved in nuclear import. Interacts with AGER. Interacts with SREBF1, TLR2, TLR4, TLR9, PTPRZ1, APEX1, FEN1, POLB, TERT. Interacts with IL1B, MSH2, XPA, XPC, HNF1A, TP53. Interacts with CD24; the probable CD24:SIGLEC10 complex is proposed to inhibit HGMB1-mediated tissue damage immune response. Interacts with THBD; prevents HGMB1 interaction with ACER/RAGE and inhibits HGMB1 pro-inflammatory activity. Interacts with HAVCR2; impairs HMGB1 binding to B-DNA and likely HMGB1-mediated innate immune response. Interacts with XPO1; mediating nuclear export. Interacts with receptor RAGE/AGER. In terms of processing, phosphorylated at serine residues. Phosphorylation in both NLS regions is required for cytoplasmic translocation followed by secretion. Post-translationally, acetylated on multiple sites upon stimulation with LPS. Acetylation on lysine residues in the nuclear localization signals (NLS 1 and NLS 2) leads to cytoplasmic localization and subsequent secretion. Acetylation on Lys-3 results in preferential binding to DNA ends and impairs DNA bending activity. Reduction/oxidation of cysteine residues Cys-23, Cys-45 and Cys-106 and a possible intramolecular disulfide bond involving Cys-23 and Cys-45 give rise to different redox forms with specific functional activities in various cellular compartments: 1- fully reduced HMGB1 (HMGB1C23hC45hC106h), 2- disulfide HMGB1 (HMGB1C23-C45C106h) and 3- sulfonyl HMGB1 (HMGB1C23soC45soC106so). In terms of processing, poly-ADP-ribosylated by PARP1 when secreted following stimulation with LPS. Post-translationally, in vitro cleavage by CASP1 is liberating a HMG box 1-containing peptide which may mediate immunogenic activity; the peptide antagonizes apoptosis-induced immune tolerance. Can be proteolytically cleaved by a thrombin:thrombomodulin complex; reduces binding to heparin and pro-inflammatory activities. Forms covalent cross-links mediated by transglutaminase TGM2, between a glutamine and the epsilon-amino group of a lysine residue, forming homopolymers and heteropolymers.

It is found in the nucleus. The protein resides in the chromosome. It localises to the cytoplasm. Its subcellular location is the secreted. The protein localises to the cell membrane. It is found in the endosome. The protein resides in the endoplasmic reticulum-Golgi intermediate compartment. Functionally, multifunctional redox sensitive protein with various roles in different cellular compartments. In the nucleus is one of the major chromatin-associated non-histone proteins and acts as a DNA chaperone involved in replication, transcription, chromatin remodeling, V(D)J recombination, DNA repair and genome stability. Proposed to be an universal biosensor for nucleic acids. Promotes host inflammatory response to sterile and infectious signals and is involved in the coordination and integration of innate and adaptive immune responses. In the cytoplasm functions as a sensor and/or chaperone for immunogenic nucleic acids implicating the activation of TLR9-mediated immune responses, and mediates autophagy. Acts as a danger-associated molecular pattern (DAMP) molecule that amplifies immune responses during tissue injury. Released to the extracellular environment can bind DNA, nucleosomes, IL-1 beta, CXCL12, AGER isoform 2/sRAGE, lipopolysaccharide (LPS) and lipoteichoic acid (LTA), and activates cells through engagement of multiple surface receptors. In the extracellular compartment fully reduced HMGB1 (released by necrosis) acts as a chemokine, disulfide HMGB1 (actively secreted) as a cytokine, and sulfonyl HMGB1 (released from apoptotic cells) promotes immunological tolerance. Has proangiogenic activity. May be involved in platelet activation. Binds to phosphatidylserine and phosphatidylethanolamide. Bound to RAGE mediates signaling for neuronal outgrowth. May play a role in accumulation of expanded polyglutamine (polyQ) proteins. Its function is as follows. Nuclear functions are attributed to fully reduced HGMB1. Associates with chromatin and binds DNA with a preference to non-canonical DNA structures such as single-stranded DNA, DNA-containing cruciforms or bent structures, supercoiled DNA and ZDNA. Can bent DNA and enhance DNA flexibility by looping thus providing a mechanism to promote activities on various gene promoters by enhancing transcription factor binding and/or bringing distant regulatory sequences into close proximity. May be involved in nucleotide excision repair (NER), mismatch repair (MMR) and base excision repair (BER) pathways, and double strand break repair such as non-homologous end joining (NHEJ). Involved in V(D)J recombination by acting as a cofactor of the RAG complex: acts by stimulating cleavage and RAG protein binding at the 23 bp spacer of conserved recombination signal sequences (RSS). In vitro can displace histone H1 from highly bent DNA. Can restructure the canonical nucleosome leading to relaxation of structural constraints for transcription factor-binding. Enhances binding of sterol regulatory element-binding proteins (SREBPs) such as SREBF1 to their cognate DNA sequences and increases their transcriptional activities. Facilitates binding of TP53 to DNA. May be involved in mitochondrial quality control and autophagy in a transcription-dependent fashion implicating HSPB1. Can modulate the activity of the telomerase complex and may be involved in telomere maintenance. In the cytoplasm proposed to dissociate the BECN1:BCL2 complex via competitive interaction with BECN1 leading to autophagy activation. Involved in oxidative stress-mediated autophagy. Can protect BECN1 and ATG5 from calpain-mediated cleavage and thus proposed to control their proautophagic and proapoptotic functions and to regulate the extent and severity of inflammation-associated cellular injury. In myeloid cells has a protective role against endotoxemia and bacterial infection by promoting autophagy. Involved in endosomal translocation and activation of TLR9 in response to CpG-DNA in macrophages. In terms of biological role, in the extracellular compartment (following either active secretion or passive release)involved in regulation of the inflammatory response. Fully reduced HGMB1 (which subsequently gets oxidized after release) in association with CXCL12 mediates the recruitment of inflammatory cells during the initial phase of tissue injury; the CXCL12:HMGB1 complex triggers CXCR4 homodimerization. Induces the migration of monocyte-derived immature dendritic cells and seems to regulate adhesive and migratory functions of neutrophils implicating AGER/RAGE and ITGAM. Can bind to various types of DNA and RNA including microbial unmethylated CpG-DNA to enhance the innate immune response to nucleic acids. Proposed to act in promiscuous DNA/RNA sensing which cooperates with subsequent discriminative sensing by specific pattern recognition receptors. Promotes extracellular DNA-induced AIM2 inflammasome activation implicating AGER/RAGE. Disulfide HMGB1 binds to transmembrane receptors, such as AGER/RAGE, TLR2, TLR4 and probably TREM1, thus activating their signal transduction pathways. Mediates the release of cytokines/chemokines such as TNF, IL-1, IL-6, IL-8, CCL2, CCL3, CCL4 and CXCL10. Promotes secretion of interferon-gamma by macrophage-stimulated natural killer (NK) cells in concert with other cytokines like IL-2 or IL-12. TLR4 is proposed to be the primary receptor promoting macrophage activation and signaling through TLR4 seems to implicate LY96/MD-2. In bacterial LPS- or LTA-mediated inflammatory responses binds to the endotoxins and transfers them to CD14 for signaling to the respective TLR4:LY96 and TLR2 complexes. Contributes to tumor proliferation by association with ACER/RAGE. Can bind to IL1-beta and signals through the IL1R1:IL1RAP receptor complex. Binding to class A CpG activates cytokine production in plasmacytoid dendritic cells implicating TLR9, MYD88 and AGER/RAGE and can activate autoreactive B cells. Via HMGB1-containing chromatin immune complexes may also promote B cell responses to endogenous TLR9 ligands through a B-cell receptor (BCR)-dependent and ACER/RAGE-independent mechanism. Inhibits phagocytosis of apoptotic cells by macrophages; the function is dependent on poly-ADP-ribosylation and involves binding to phosphatidylserine on the cell surface of apoptotic cells. In adaptive immunity may be involved in enhancing immunity through activation of effector T-cells and suppression of regulatory T (TReg) cells. In contrast, without implicating effector or regulatory T-cells, required for tumor infiltration and activation of T-cells expressing the lymphotoxin LTA:LTB heterotrimer thus promoting tumor malignant progression. Also reported to limit proliferation of T-cells. Released HMGB1:nucleosome complexes formed during apoptosis can signal through TLR2 to induce cytokine production. Involved in induction of immunological tolerance by apoptotic cells; its pro-inflammatory activities when released by apoptotic cells are neutralized by reactive oxygen species (ROS)-dependent oxidation specifically on Cys-106. During macrophage activation by activated lymphocyte-derived self apoptotic DNA (ALD-DNA) promotes recruitment of ALD-DNA to endosomes. In Bos taurus (Bovine), this protein is High mobility group protein B1 (HMGB1).